A 513-amino-acid polypeptide reads, in one-letter code: GMP synthase [glutamine-hydrolyzing] (513 aa).

The 191-residue stretch at 7-197 folds into the Glutamine amidotransferase type-1 domain; that stretch reads TILVLDFGGQ…LFGVCGCTGE (191 aa). The active-site Nucleophile is Cys84. Residues His171 and Glu173 contribute to the active site. A GMPS ATP-PPase domain is found at 198–387; the sequence is WTMENFIEEQ…LGLPEDIVWR (190 aa). Residue 225 to 231 coordinates ATP; it reads SGGVDSS.

Homodimer.

It catalyses the reaction XMP + L-glutamine + ATP + H2O = GMP + L-glutamate + AMP + diphosphate + 2 H(+). Its pathway is purine metabolism; GMP biosynthesis; GMP from XMP (L-Gln route): step 1/1. Catalyzes the synthesis of GMP from XMP. The sequence is that of GMP synthase [glutamine-hydrolyzing] from Heliobacterium modesticaldum (strain ATCC 51547 / Ice1).